The primary structure comprises 403 residues: Non-structural maintenance of chromosomes element 4 homolog A (403 aa).

Positions 1–45 (MRKTVKRESEATGGKREADDEPEKLRSVKKEKQRKTEADSVRPDE) are enriched in basic and acidic residues. Disordered regions lie at residues 1–57 (MRKT…QGIS), 194–226 (LKQR…EEKT), and 342–403 (SSCP…LTSS). Residues 196–206 (QRKRAPNRKRT) are compositionally biased toward basic residues. Over residues 342-353 (SSCPAASAPASA) the composition is skewed to low complexity. Residues 354 to 363 (DFTQDTQTTP) are compositionally biased toward polar residues. The span at 384-393 (TPDKEGDGTR) shows a compositional bias: basic and acidic residues. Positions 394–403 (RRCKRRLTSS) are enriched in basic residues.

The protein belongs to the NSE4 family. As to quaternary structure, interacts with SMC5, SMC6A or SMC6B. The SMC5-SMC6 complex is composed of the SMC5 and SMC6 heterodimer attached via their hinge domain and from the non-SMC subunit NSE4A or NSE4B. As to expression, expressed in seedlings, rosette leaves and floral buds.

It localises to the nucleus. Its function is as follows. Component of the SMC5-SMC6 complex, that promotes sister chromatid alignment after DNA damage and facilitates double-stranded DNA breaks (DSBs) repair via homologous recombination between sister chromatids. This Arabidopsis thaliana (Mouse-ear cress) protein is Non-structural maintenance of chromosomes element 4 homolog A (NSE4A).